The chain runs to 652 residues: Acetyl-coenzyme A synthetase (652 aa).

Residues 191–194 (RAGR), Thr311, and Asn335 contribute to the CoA site. ATP-binding positions include 387–389 (GEP), 411–416 (DTWWQT), Asp500, and Arg515. CoA is bound at residue Ser523. Arg526 contacts ATP. Mg(2+)-binding residues include Val537, His539, and Ile542. Residue Arg584 coordinates CoA. Lys609 carries the N6-acetyllysine modification.

The protein belongs to the ATP-dependent AMP-binding enzyme family. The cofactor is Mg(2+). Post-translationally, acetylated. Deacetylation by the SIR2-homolog deacetylase activates the enzyme.

The enzyme catalyses acetate + ATP + CoA = acetyl-CoA + AMP + diphosphate. Its function is as follows. Catalyzes the conversion of acetate into acetyl-CoA (AcCoA), an essential intermediate at the junction of anabolic and catabolic pathways. Acs undergoes a two-step reaction. In the first half reaction, Acs combines acetate with ATP to form acetyl-adenylate (AcAMP) intermediate. In the second half reaction, it can then transfer the acetyl group from AcAMP to the sulfhydryl group of CoA, forming the product AcCoA. In terms of biological role, enables the cell to use acetate during aerobic growth to generate energy via the TCA cycle, and biosynthetic compounds via the glyoxylate shunt. Acetylates CheY, the response regulator involved in flagellar movement and chemotaxis. In Citrobacter koseri (strain ATCC BAA-895 / CDC 4225-83 / SGSC4696), this protein is Acetyl-coenzyme A synthetase.